Consider the following 325-residue polypeptide: Glutarate 2-hydroxylase (325 aa).

His-160, Asp-162, and His-292 together coordinate Fe cation.

This sequence belongs to the glutarate hydroxylase family. Homotetramer. The cofactor is Fe(2+).

It carries out the reaction glutarate + 2-oxoglutarate + O2 = (S)-2-hydroxyglutarate + succinate + CO2. It participates in amino-acid degradation. Functionally, acts as an alpha-ketoglutarate-dependent dioxygenase catalyzing hydroxylation of glutarate (GA) to L-2-hydroxyglutarate (L2HG). Functions in a L-lysine degradation pathway that proceeds via cadaverine, glutarate and L-2-hydroxyglutarate. This chain is Glutarate 2-hydroxylase, found in Shigella boydii serotype 18 (strain CDC 3083-94 / BS512).